Here is a 2314-residue protein sequence, read N- to C-terminus: Protein Ycf2 (2314 aa).

1653-1660 (GSIGTGRS) contributes to the ATP binding site.

This sequence belongs to the Ycf2 family.

The protein localises to the plastid. It is found in the chloroplast stroma. Probable ATPase of unknown function. Its presence in a non-photosynthetic plant (Epifagus virginiana) and experiments in tobacco indicate that it has an essential function which is probably not related to photosynthesis. The chain is Protein Ycf2 from Piper cenocladum (Ant piper).